Consider the following 80-residue polypeptide: Large ribosomal subunit protein uL24 (80 aa).

This sequence belongs to the universal ribosomal protein uL24 family. As to quaternary structure, part of the 50S ribosomal subunit.

Its function is as follows. One of two assembly initiator proteins, it binds directly to the 5'-end of the 23S rRNA, where it nucleates assembly of the 50S subunit. In terms of biological role, one of the proteins that surrounds the polypeptide exit tunnel on the outside of the subunit. The chain is Large ribosomal subunit protein uL24 from Chlorobium phaeobacteroides (strain BS1).